Reading from the N-terminus, the 504-residue chain is D-alanine--D-alanyl carrier protein ligase (504 aa).

152-153 is a binding site for ATP; the sequence is TS. D197 contacts D-alanine. 292-297 contacts ATP; sequence NTYGPT. Residue V301 participates in D-alanine binding. ATP is bound by residues D383, 394–397, and K492; that span reads YNGR. K492 is a D-alanine binding site.

The protein belongs to the ATP-dependent AMP-binding enzyme family. DltA subfamily.

It is found in the cytoplasm. It carries out the reaction holo-[D-alanyl-carrier protein] + D-alanine + ATP = D-alanyl-[D-alanyl-carrier protein] + AMP + diphosphate. It participates in cell wall biogenesis; lipoteichoic acid biosynthesis. Functionally, catalyzes the first step in the D-alanylation of lipoteichoic acid (LTA), the activation of D-alanine and its transfer onto the D-alanyl carrier protein (Dcp) DltC. In an ATP-dependent two-step reaction, forms a high energy D-alanyl-AMP intermediate, followed by transfer of the D-alanyl residue as a thiol ester to the phosphopantheinyl prosthetic group of the Dcp. D-alanylation of LTA plays an important role in modulating the properties of the cell wall in Gram-positive bacteria, influencing the net charge of the cell wall. In Bacillus mycoides (strain KBAB4) (Bacillus weihenstephanensis), this protein is D-alanine--D-alanyl carrier protein ligase.